The chain runs to 224 residues: Flagellar L-ring protein (224 aa).

The signal sequence occupies residues 1-15 (MARYFILAVALLLTA). Cysteine 16 is lipidated: N-palmitoyl cysteine. Cysteine 16 carries the S-diacylglycerol cysteine lipid modification.

The protein belongs to the FlgH family. As to quaternary structure, the basal body constitutes a major portion of the flagellar organelle and consists of four rings (L,P,S, and M) mounted on a central rod.

The protein localises to the cell outer membrane. It is found in the bacterial flagellum basal body. Functionally, assembles around the rod to form the L-ring and probably protects the motor/basal body from shearing forces during rotation. The chain is Flagellar L-ring protein from Shewanella sp. (strain MR-7).